The sequence spans 562 residues: Protein FAM83D-A (562 aa).

Residues 424 to 471 (ITTQTTETSQCTTQTPAPTSSVARLSNSSNSSSSSFSSTSITSTGSNC) form a disordered region. Over residues 425–471 (TTQTTETSQCTTQTPAPTSSVARLSNSSNSSSSSFSSTSITSTGSNC) the composition is skewed to low complexity.

The protein belongs to the FAM83 family.

It localises to the cytoplasm. The protein resides in the cytoskeleton. The protein localises to the spindle. Its subcellular location is the spindle pole. In terms of biological role, may regulate cell proliferation, growth, migration and epithelial to mesenchymal transition. May also be important for proper chromosome congression and alignment during mitosis. The chain is Protein FAM83D-A from Xenopus laevis (African clawed frog).